Consider the following 137-residue polypeptide: Small ribosomal subunit protein bS6 (137 aa).

This sequence belongs to the bacterial ribosomal protein bS6 family.

Its function is as follows. Binds together with bS18 to 16S ribosomal RNA. In Mycoplasma mycoides subsp. mycoides SC (strain CCUG 32753 / NCTC 10114 / PG1), this protein is Small ribosomal subunit protein bS6.